The primary structure comprises 205 residues: GTP cyclohydrolase-2 (205 aa).

49-53 (RVHSE) contributes to the GTP binding site. Zn(2+) contacts are provided by C54, C65, and C67. GTP contacts are provided by residues Q70, 92 to 94 (EGR), and T114. Catalysis depends on D126, which acts as the Proton acceptor. The active-site Nucleophile is R128. Residues T149 and K154 each coordinate GTP.

Belongs to the GTP cyclohydrolase II family. Zn(2+) is required as a cofactor.

It catalyses the reaction GTP + 4 H2O = 2,5-diamino-6-hydroxy-4-(5-phosphoribosylamino)-pyrimidine + formate + 2 phosphate + 3 H(+). The protein operates within cofactor biosynthesis; riboflavin biosynthesis; 5-amino-6-(D-ribitylamino)uracil from GTP: step 1/4. Functionally, catalyzes the conversion of GTP to 2,5-diamino-6-ribosylamino-4(3H)-pyrimidinone 5'-phosphate (DARP), formate and pyrophosphate. The chain is GTP cyclohydrolase-2 from Pseudomonas syringae pv. tomato (strain ATCC BAA-871 / DC3000).